The primary structure comprises 214 residues: A-type ATP synthase subunit D (214 aa).

The protein belongs to the V-ATPase D subunit family. In terms of assembly, has multiple subunits with at least A(3), B(3), C, D, E, F, H, I and proteolipid K(x).

It is found in the cell membrane. Its function is as follows. Component of the A-type ATP synthase that produces ATP from ADP in the presence of a proton gradient across the membrane. This chain is A-type ATP synthase subunit D, found in Thermococcus sibiricus (strain DSM 12597 / MM 739).